Consider the following 131-residue polypeptide: Fumarate reductase subunit C (131 aa).

The next 3 helical transmembrane spans lie at 30–50 (EGTA…LFAL), 63–83 (FLQN…ALLH), and 109–129 (IIKS…FVAL).

It belongs to the FrdC family. Part of an enzyme complex containing four subunits: a flavoprotein (FrdA), an iron-sulfur protein (FrdB), and two hydrophobic anchor proteins (FrdC and FrdD).

The protein localises to the cell inner membrane. In terms of biological role, two distinct, membrane-bound, FAD-containing enzymes are responsible for the catalysis of fumarate and succinate interconversion; fumarate reductase is used in anaerobic growth, and succinate dehydrogenase is used in aerobic growth. Anchors the catalytic components of the fumarate reductase complex to the cell inner membrane, binds quinones. This Escherichia coli O17:K52:H18 (strain UMN026 / ExPEC) protein is Fumarate reductase subunit C.